A 229-amino-acid polypeptide reads, in one-letter code: Uracil-DNA glycosylase (229 aa).

D71 acts as the Proton acceptor in catalysis.

This sequence belongs to the uracil-DNA glycosylase (UDG) superfamily. UNG family.

It is found in the cytoplasm. The enzyme catalyses Hydrolyzes single-stranded DNA or mismatched double-stranded DNA and polynucleotides, releasing free uracil.. Its function is as follows. Excises uracil residues from the DNA which can arise as a result of misincorporation of dUMP residues by DNA polymerase or due to deamination of cytosine. The chain is Uracil-DNA glycosylase from Campylobacter lari (strain RM2100 / D67 / ATCC BAA-1060).